The primary structure comprises 122 residues: uncharacterized protein (122 aa).

The next 2 helical transmembrane spans lie at 9 to 29 (VATV…STWV) and 60 to 80 (LFSF…CLIM).

It localises to the cytoplasm. It is found in the membrane. This is an uncharacterized protein from Schizosaccharomyces pombe (strain 972 / ATCC 24843) (Fission yeast).